A 361-amino-acid chain; its full sequence is 3-dehydroquinate synthase (361 aa).

The protein belongs to the archaeal-type DHQ synthase family.

It catalyses the reaction 2-amino-2,3,7-trideoxy-D-lyxo-hept-6-ulosonate + NAD(+) + H2O = 3-dehydroquinate + NH4(+) + NADH + H(+). Its function is as follows. Catalyzes the oxidative deamination and cyclization of 2-amino-3,7-dideoxy-D-threo-hept-6-ulosonic acid (ADH) to yield 3-dehydroquinate (DHQ), which is fed into the canonical shikimic pathway of aromatic amino acid biosynthesis. This is 3-dehydroquinate synthase from Methanococcus vannielii (strain ATCC 35089 / DSM 1224 / JCM 13029 / OCM 148 / SB).